Reading from the N-terminus, the 552-residue chain is FERRY endosomal RAB5 effector complex subunit 3 (552 aa).

Residue Ser-79 is modified to Phosphoserine.

Component of the FERRY complex composed of five subunits, TBCK, PPP1R21, FERRY3, CRYZL1 and GATD1 with a ratio of 1:2:1:2:4, respectively.

The protein resides in the cytoplasm. The protein localises to the early endosome. In terms of biological role, component of the FERRY complex (Five-subunit Endosomal Rab5 and RNA/ribosome intermediary). The FERRY complex directly interacts with mRNAs and RAB5A, and functions as a RAB5A effector involved in the localization and the distribution of specific mRNAs most likely by mediating their endosomal transport. The complex recruits mRNAs and ribosomes to early endosomes through direct mRNA-interaction. Plays a role in mast cell degranulation. This is FERRY endosomal RAB5 effector complex subunit 3 from Mus musculus (Mouse).